We begin with the raw amino-acid sequence, 414 residues long: Acetate kinase (414 aa).

Mg(2+) is bound at residue asparagine 7. ATP is bound at residue lysine 14. Arginine 99 lines the substrate pocket. The active-site Proton donor/acceptor is the aspartate 157. ATP contacts are provided by residues 217-221 and 341-345; these read HLGNG and GIGEN. Glutamate 395 contributes to the Mg(2+) binding site.

The protein belongs to the acetokinase family. As to quaternary structure, homodimer. It depends on Mg(2+) as a cofactor. Mn(2+) is required as a cofactor.

The protein localises to the cytoplasm. The catalysed reaction is acetate + ATP = acetyl phosphate + ADP. Its pathway is metabolic intermediate biosynthesis; acetyl-CoA biosynthesis; acetyl-CoA from acetate: step 1/2. In terms of biological role, catalyzes the formation of acetyl phosphate from acetate and ATP. Can also catalyze the reverse reaction. The polypeptide is Acetate kinase (Solibacter usitatus (strain Ellin6076)).